An 89-amino-acid polypeptide reads, in one-letter code: Elongation factor 1-beta (89 aa).

It belongs to the EF-1-beta/EF-1-delta family.

Functionally, promotes the exchange of GDP for GTP in EF-1-alpha/GDP, thus allowing the regeneration of EF-1-alpha/GTP that could then be used to form the ternary complex EF-1-alpha/GTP/AAtRNA. In Methanococcus maripaludis (strain C7 / ATCC BAA-1331), this protein is Elongation factor 1-beta.